A 208-amino-acid chain; its full sequence is Peptide deformylase 3 (208 aa).

The Fe cation site is built by Cys120 and His162. Glu163 is a catalytic residue. His166 is a Fe cation binding site.

It belongs to the polypeptide deformylase family. The cofactor is Fe(2+).

It catalyses the reaction N-terminal N-formyl-L-methionyl-[peptide] + H2O = N-terminal L-methionyl-[peptide] + formate. Its function is as follows. Removes the formyl group from the N-terminal Met of newly synthesized proteins. Requires at least a dipeptide for an efficient rate of reaction. N-terminal L-methionine is a prerequisite for activity but the enzyme has broad specificity at other positions. This Streptomyces coelicolor (strain ATCC BAA-471 / A3(2) / M145) protein is Peptide deformylase 3.